The following is a 377-amino-acid chain: 1-deoxy-D-xylulose 5-phosphate reductoisomerase (377 aa).

T20, G21, I23, N46, and N115 together coordinate NADPH. Residue K116 participates in 1-deoxy-D-xylulose 5-phosphate binding. E117 is a binding site for NADPH. A Mn(2+)-binding site is contributed by D141. Positions 142, 143, 166, and 189 each coordinate 1-deoxy-D-xylulose 5-phosphate. Position 143 (E143) interacts with Mn(2+). G195 provides a ligand contact to NADPH. Residues S202, N207, K208, and E211 each coordinate 1-deoxy-D-xylulose 5-phosphate. E211 is a binding site for Mn(2+).

It belongs to the DXR family. It depends on Mg(2+) as a cofactor. The cofactor is Mn(2+).

The enzyme catalyses 2-C-methyl-D-erythritol 4-phosphate + NADP(+) = 1-deoxy-D-xylulose 5-phosphate + NADPH + H(+). It participates in isoprenoid biosynthesis; isopentenyl diphosphate biosynthesis via DXP pathway; isopentenyl diphosphate from 1-deoxy-D-xylulose 5-phosphate: step 1/6. Catalyzes the NADPH-dependent rearrangement and reduction of 1-deoxy-D-xylulose-5-phosphate (DXP) to 2-C-methyl-D-erythritol 4-phosphate (MEP). The chain is 1-deoxy-D-xylulose 5-phosphate reductoisomerase from Malacoplasma penetrans (strain HF-2) (Mycoplasma penetrans).